A 294-amino-acid chain; its full sequence is Deubiquitinase OTUD6B (294 aa).

N-acetylmethionine is present on Met-1. An OTU domain is found at 148 to 285 (LEIKQIPSDG…GEHYNSVTRL (138 aa)). Residues 153 to 159 (IPSDGHC) are cys-loop. Residue Asp-156 is part of the active site. Cys-159 functions as the Nucleophile in the catalytic mechanism. Residues 220-230 (IVNTAAWGGQL) are variable-loop. The tract at residues 268 to 278 (YMRHAYGLGEH) is his-loop. His-278 is an active-site residue.

As to quaternary structure, interacts with the eukaryotic translation initiation factor 4F complex. Ubiquitously expressed. Expression is observed in several organ systems including the cardiovascular, digestive, central and peripheral nervous and musculoskeletal systems.

It carries out the reaction Thiol-dependent hydrolysis of ester, thioester, amide, peptide and isopeptide bonds formed by the C-terminal Gly of ubiquitin (a 76-residue protein attached to proteins as an intracellular targeting signal).. Deubiquitinating enzyme that may play a role in the ubiquitin-dependent regulation of protein synthesis, downstream of mTORC1. May associate with the protein synthesis initiation complex and modify its ubiquitination to repress translation. May also repress DNA synthesis and modify different cellular targets thereby regulating cell growth and proliferation. May also play a role in proteasome assembly and function. The protein is Deubiquitinase OTUD6B of Mus musculus (Mouse).